The chain runs to 173 residues: Cell division protein SepF (173 aa).

The interval 31–82 (FEDFDEPLDERPSRNRSPRDDSRNNAVTDSSDHSPSRNERRSPAPAPATADL) is disordered. Basic and acidic residues-rich tracts occupy residues 39–53 (DERPSRNRSPRDDSR) and 60–72 (SSDHSPSRNERRS).

Belongs to the SepF family. As to quaternary structure, homodimer. Interacts with FtsZ.

The protein resides in the cytoplasm. In terms of biological role, cell division protein that is part of the divisome complex and is recruited early to the Z-ring. Probably stimulates Z-ring formation, perhaps through the cross-linking of FtsZ protofilaments. Its function overlaps with FtsA. The chain is Cell division protein SepF from Thermobifida fusca (strain YX).